A 444-amino-acid polypeptide reads, in one-letter code: Phosphoglucosamine mutase (444 aa).

Ser102 acts as the Phosphoserine intermediate in catalysis. The Mg(2+) site is built by Ser102, Asp239, Asp241, and Asp243. Ser102 carries the post-translational modification Phosphoserine.

It belongs to the phosphohexose mutase family. Mg(2+) serves as cofactor. In terms of processing, activated by phosphorylation.

It catalyses the reaction alpha-D-glucosamine 1-phosphate = D-glucosamine 6-phosphate. In terms of biological role, catalyzes the conversion of glucosamine-6-phosphate to glucosamine-1-phosphate. The polypeptide is Phosphoglucosamine mutase (Saccharopolyspora erythraea (strain ATCC 11635 / DSM 40517 / JCM 4748 / NBRC 13426 / NCIMB 8594 / NRRL 2338)).